The primary structure comprises 167 residues: Ribosome maturation factor RimM (167 aa).

One can recognise a PRC barrel domain in the interval 92 to 166 (DGVYYYRELL…EVRVELMEGL (75 aa)).

Belongs to the RimM family. Binds ribosomal protein uS19.

The protein localises to the cytoplasm. An accessory protein needed during the final step in the assembly of 30S ribosomal subunit, possibly for assembly of the head region. Essential for efficient processing of 16S rRNA. May be needed both before and after RbfA during the maturation of 16S rRNA. It has affinity for free ribosomal 30S subunits but not for 70S ribosomes. The polypeptide is Ribosome maturation factor RimM (Lactobacillus delbrueckii subsp. bulgaricus (strain ATCC 11842 / DSM 20081 / BCRC 10696 / JCM 1002 / NBRC 13953 / NCIMB 11778 / NCTC 12712 / WDCM 00102 / Lb 14)).